The chain runs to 1030 residues: Protein phosphatase 1 regulatory subunit 12A (1030 aa).

Residues 35-38 (KVKF) carry the KVKF motif motif. ANK repeat units follow at residues 39–68 (DDGA…DINY), 72–101 (DGLT…NINQ), 105–134 (EGWI…HVGA), 138–164 (EGDT…RQGV), 198–227 (SGGT…DVNI), and 231–260 (DGWT…DMEM). 2 positions are modified to (3S)-3-hydroxyasparagine; by HIF1AN; partial: asparagine 67 and asparagine 100. Residue asparagine 226 is modified to (3S)-3-hydroxyasparagine; by HIF1AN; partial. 2 disordered regions span residues 290-628 (LHSE…SVPT) and 643-928 (ASTT…EKDD). Positions 291 to 300 (HSEKRDKKSP) are enriched in basic and acidic residues. The residue at position 299 (serine 299) is a Phosphoserine. Residues 302–316 (IESTANMDNNQSQKT) show a composition bias toward polar residues. Over residues 318-340 (KNKETLIIEPEKNASRIESLEQE) the composition is skewed to basic and acidic residues. Acidic residues predominate over residues 357–369 (SEEDEEDDSESEA). A compositionally biased stretch (low complexity) spans 385-402 (TSSTQAAPVAVTTPTVSS). Residues serine 422 and serine 432 each carry the phosphoserine modification. Over residues 422–432 (SPKEEERKDES) the composition is skewed to basic and acidic residues. Threonine 443 is modified (phosphothreonine). Position 445 is a phosphoserine; by NUAK1 (serine 445). Tyrosine 446 is subject to Phosphotyrosine. Low complexity predominate over residues 469 to 480 (RSASSPRLSSSL). Serine 472 carries the post-translational modification Phosphoserine; by NUAK1. At serine 473 the chain carries Phosphoserine; by CDK1. Position 477 is a phosphoserine (serine 477). Positions 481 to 491 (DNKEKEKDSKG) are enriched in basic and acidic residues. 2 positions are modified to phosphoserine: serine 507 and serine 509. Residues 540-551 (NSSVNEGSTYHK) are compositionally biased toward polar residues. Over residues 564–610 (SSSVPSTTSTPTVTSAAGLQKSLLSSTSTTTKITTGSSSAGTQSSTS) the composition is skewed to low complexity. Phosphoserine occurs at positions 601 and 618. Over residues 614 to 625 (WAEDSTEKEKDS) the composition is skewed to basic and acidic residues. Low complexity predominate over residues 643-660 (ASTTTLTTTTAGTVSSTT). The span at 673–682 (VRDEESESQR) shows a compositional bias: basic and acidic residues. An interaction with ROCK2 region spans residues 682 to 864 (RKARSRQARQ…VSFWTQDSDE (183 aa)). Over residues 683–693 (KARSRQARQSR) the composition is skewed to basic residues. A phosphoserine; by PKA and PKG; in vitro mark is found at serine 692 and serine 695. At threonine 696 the chain carries Phosphothreonine; by ROCK1, ROCK2, CDC42BP, ZIPK/DAPK3 and RAF1. The segment covering 718-767 (RTREQENEEKEKEEKEKQDKEKQEEKKESETSREDEYKQKYSRTYDETYQ) has biased composition (basic and acidic residues). Low complexity predominate over residues 773-795 (STSSSTTPSSSLSTMSSSLYASS). Polar residues predominate over residues 796 to 810 (QLNRPNSLVGITSAY). Serine 802 is subject to Phosphoserine. The segment covering 814-840 (ITKENEREGEKREEEKEGEDKSQPKSI) has biased composition (basic and acidic residues). The segment covering 841–852 (RERRRPREKRRS) has biased composition (basic residues). Position 852 is a phosphoserine; by ROCK2 (serine 852). A compositionally biased stretch (acidic residues) spans 861 to 875 (DSDENEQEQQSDTEE). A phosphoserine mark is found at serine 862 and serine 871. Residues 884–897 (TDSISRYETSSTSA) are compositionally biased toward polar residues. Phosphoserine is present on residues serine 903 and serine 908. Residues 903–913 (SLLGRSGSYSY) show a composition bias toward low complexity. The residue at position 910 (serine 910) is a Phosphoserine; by NUAK1. A compositionally biased stretch (basic and acidic residues) spans 914-928 (LEERKPYSSRLEKDD). Phosphoserine is present on serine 995.

In terms of assembly, PP1 comprises a catalytic subunit, PPP1CA, PPP1CB or PPP1CC, and one or several targeting or regulatory subunits. PPP1R12A mediates binding to myosin. Interacts with ARHA and CIT. Binds PPP1R12B, ROCK1 and IL16. Interacts directly with PRKG1. Non-covalent dimer of 2 dimers; PRKG1-PRKG1 and PPP1R12A-PPP1R12A. Interacts with SMTNL1. Interacts with PPP1CB; the interaction is direct. Interacts (when phosphorylated at Ser-445, Ser-472 and Ser-910) with 14-3-3. Interacts with ROCK1 and ROCK2. Interacts with isoform 1 and isoform 2 of ZIPK/DAPK3. Interacts with RAF1. Interacts with HIF1AN. Interacts with NCKAP1L. Phosphorylated by CIT (Rho-associated kinase). Phosphorylated cooperatively by ROCK1 and CDC42BP on Thr-696. Phosphorylated on upon DNA damage, probably by ATM or ATR. In vitro, phosphorylation of Ser-695 by PKA and PKG appears to prevent phosphorylation of the inhibitory site Thr-696, probably mediated by PRKG1. Phosphorylation at Ser-445, Ser-472 and Ser-910 by NUAK1 promotes interaction with 14-3-3, leading to inhibit interaction with myosin light chain MLC2, preventing dephosphorylation of MLC2. May be phosphorylated at Thr-696 by DMPK; may inhibit the myosin phosphatase activity. Phosphorylated at Ser-473 by CDK1 during mitosis, creating docking sites for the POLO box domains of PLK1. Subsequently, PLK1 binds and phosphorylates PPP1R12A. In terms of tissue distribution, expressed in striated muscles, specifically in type 2a fibers (at protein level).

It is found in the cytoplasm. The protein localises to the cytoskeleton. Its subcellular location is the stress fiber. Key regulator of protein phosphatase 1C (PPP1C). Mediates binding to myosin. As part of the PPP1C complex, involved in dephosphorylation of PLK1. Capable of inhibiting HIF1AN-dependent suppression of HIF1A activity. The chain is Protein phosphatase 1 regulatory subunit 12A from Homo sapiens (Human).